The following is a 182-amino-acid chain: ADP-ribosylation factor-like protein 3 (182 aa).

The N-myristoyl glycine moiety is linked to residue Gly2. Residue Ser5 is modified to Phosphoserine. GTP contacts are provided by residues 24–31 (GLDNAGKT), Thr48, 67–71 (DIGGQ), Gly70, 126–129 (NKQD), and 159–161 (SAL). Thr31 and Thr48 together coordinate Mg(2+).

This sequence belongs to the small GTPase superfamily. Arf family. In terms of assembly, found in a complex with ARL3, RP2 and UNC119 (or UNC119B); RP2 induces hydrolysis of GTP ARL3 in the complex, leading to the release of UNC119 (or UNC119B). Interacts with RP2; interaction is direct and stimulated with the activated GTP-bound form of ARL3. Interacts with SYS1. Interacts with ARL2BP; the GTP-bound form interacts with ARL2BP. Microtubule-associated protein. Does not interact with TBCC. Interacts with RP2. Interacts with PDE6D; the interaction occurs specifically with the GTP-bound form of ARL3. Interacts with GGA1; the interaction recruits PKD1:PKD2 complex to trans-Golgi network and is required for ciliary targeting of PKD1:PKD2 complex. Interacts with DNAAF9.

The protein localises to the golgi apparatus membrane. The protein resides in the cytoplasm. It is found in the cytoskeleton. Its subcellular location is the spindle. It localises to the nucleus. The protein localises to the microtubule organizing center. The protein resides in the centrosome. It is found in the cell projection. Its subcellular location is the cilium. In terms of biological role, small GTP-binding protein which cycles between an inactive GDP-bound and an active GTP-bound form, and the rate of cycling is regulated by guanine nucleotide exchange factors (GEF) and GTPase-activating proteins (GAP). Required for normal cytokinesis and cilia signaling. Requires assistance from GTPase-activating proteins (GAPs) like RP2 and PDE6D, in order to cycle between inactive GDP-bound and active GTP-bound forms. Required for targeting proteins to the cilium, including myristoylated NPHP3 and prenylated INPP5E. Targets NPHP3 to the ciliary membrane by releasing myristoylated NPHP3 from UNC119B cargo adapter into the cilium. Required for PKD1:PKD2 complex targeting from the trans-Golgi network to the cilium. The sequence is that of ADP-ribosylation factor-like protein 3 (Arl3) from Rattus norvegicus (Rat).